The primary structure comprises 252 residues: Small ribosomal subunit protein uS3 (252 aa).

The KH type-2 domain maps to I16–D85. Residues E233 to E252 are disordered.

Belongs to the universal ribosomal protein uS3 family. In terms of assembly, part of the 30S ribosomal subunit.

Functionally, binds the lower part of the 30S subunit head. This is Small ribosomal subunit protein uS3 from Methanosphaera stadtmanae (strain ATCC 43021 / DSM 3091 / JCM 11832 / MCB-3).